We begin with the raw amino-acid sequence, 750 residues long: Putative tyrosine-protein kinase EpsB (750 aa).

The Cytoplasmic segment spans residues 1-31 (MTQNLPQPPAVNAPENELDLVRYLDVLVANR). The helical transmembrane segment at 32–52 (WLIAGIAAAVMLLGAAYAFLA) threads the bilayer. The Periplasmic segment spans residues 53–444 (RPVYEADIMV…VPEEPVKPKK (392 aa)). The chain crosses the membrane as a helical span at residues 445 to 465 (LTVTPLAGVLGVVLGVMAAFV). Topologically, residues 466-750 (RNALFGGITD…NSKPPEAESA (285 aa)) are cytoplasmic.

Belongs to the etk/wzc family.

It localises to the cell inner membrane. It carries out the reaction L-tyrosyl-[protein] + ATP = O-phospho-L-tyrosyl-[protein] + ADP + H(+). Its function is as follows. Probably involved in polymerization and/or export of exopolysaccharide EPS I which functions as a virulence factor. May be involved in an ATP-dependent process in the pathway for EPS I production, possibly export of the trimeric repeat units across the inner membrane or their polymerization. The polypeptide is Putative tyrosine-protein kinase EpsB (epsB) (Ralstonia solanacearum (Pseudomonas solanacearum)).